Reading from the N-terminus, the 67-residue chain is SPbeta prophage-derived uncharacterized protein YopZ (67 aa).

A coiled-coil region spans residues 1-40; sequence MTSEMQLQAQIDVIEKENKELRRRNEELGQTVECQNKQIV. A helical transmembrane segment spans residues 44–66; sequence WRLLFFASSWIVYGIVSAIKYLW.

The protein resides in the cell membrane. This chain is SPbeta prophage-derived uncharacterized protein YopZ (yopZ), found in Bacillus subtilis (strain 168).